The sequence spans 122 residues: MAKLDKNQLIESLKEMTIMEIDEIIKAVEEAFGVSATPVVAAGAVGGTQEAASEVTVKVTGYTDNAKLAVLKLYREIAGVGLMEAKTAVEKLPCVVKQDIKPEEAEELKKRFVEVGATVEIK.

This sequence belongs to the bacterial ribosomal protein bL12 family. In terms of assembly, homodimer. Part of the ribosomal stalk of the 50S ribosomal subunit. Forms a multimeric L10(L12)X complex, where L10 forms an elongated spine to which 2 to 4 L12 dimers bind in a sequential fashion. Binds GTP-bound translation factors.

In terms of biological role, forms part of the ribosomal stalk which helps the ribosome interact with GTP-bound translation factors. Is thus essential for accurate translation. This Mycoplasma pneumoniae (strain ATCC 29342 / M129 / Subtype 1) (Mycoplasmoides pneumoniae) protein is Large ribosomal subunit protein bL12.